A 145-amino-acid polypeptide reads, in one-letter code: UPF0735 ACT domain-containing protein CLD_1535 (145 aa).

One can recognise an ACT domain in the interval 69–144 (TIGLLLGHER…NVIKVDLIAM (76 aa)).

The protein belongs to the UPF0735 family.

The polypeptide is UPF0735 ACT domain-containing protein CLD_1535 (Clostridium botulinum (strain Okra / Type B1)).